The primary structure comprises 434 residues: Deferrochelatase (434 aa).

Positions 1 to 45 (MRDKTGPKFGPYQPDDEAVSPSRRRLILGMGMVSGALVLGGAKTA) form a signal peptide, tat-type signal. Residues 247–249 (GTA), His340, 345–347 (NPR), and Arg358 each bind heme b.

Belongs to the DyP-type peroxidase family. EfeB subfamily. In terms of assembly, homodimer. Part of a ferrous iron transporter composed of EfeU, EfeO and EfeB. The cofactor is heme b. Predicted to be exported by the Tat system. The position of the signal peptide cleavage has not been experimentally proven.

The protein localises to the periplasm. The catalysed reaction is heme b + 2 H(+) = protoporphyrin IX + Fe(2+). Functionally, involved in the recovery of exogenous heme iron. Extracts iron from heme while preserving the protoporphyrin ring intact. The protein is Deferrochelatase (efeB) of Yersinia pseudotuberculosis serotype I (strain IP32953).